A 178-amino-acid polypeptide reads, in one-letter code: uncharacterized protein (178 aa).

The 165-residue stretch at 9–173 folds into the N-acetyltransferase domain; it reads LTLRKMELED…IDVYMFSLLK (165 aa).

This is an uncharacterized protein from Bacillus licheniformis.